We begin with the raw amino-acid sequence, 319 residues long: F-box only protein 8 (319 aa).

One can recognise an F-box domain in the interval 68 to 111 (FINLEMLPPELSFTILSYLNATDLCLASCVWQDLANDELLWQGL). Positions 146 to 276 (FNANPDEGVN…LILLSIDLTS (131 aa)) constitute an SEC7 domain.

In terms of biological role, may promote guanine-nucleotide exchange on an ARF. Promotes the activation of ARF through replacement of GDP with GTP (Potential). This chain is F-box only protein 8 (FBXO8), found in Bos taurus (Bovine).